A 371-amino-acid polypeptide reads, in one-letter code: Glutamate 5-kinase (371 aa).

Lys-11 contacts ATP. Substrate is bound by residues Ser-52, Asp-139, and Asn-151. Residues Thr-171 to Asp-172 and Thr-213 to Lys-219 each bind ATP. One can recognise a PUA domain in the interval Glu-278–Glu-356.

It belongs to the glutamate 5-kinase family.

The protein localises to the cytoplasm. The enzyme catalyses L-glutamate + ATP = L-glutamyl 5-phosphate + ADP. It functions in the pathway amino-acid biosynthesis; L-proline biosynthesis; L-glutamate 5-semialdehyde from L-glutamate: step 1/2. Its function is as follows. Catalyzes the transfer of a phosphate group to glutamate to form L-glutamate 5-phosphate. This Synechococcus sp. (strain JA-3-3Ab) (Cyanobacteria bacterium Yellowstone A-Prime) protein is Glutamate 5-kinase.